Consider the following 497-residue polypeptide: tRNA-2-methylthio-N(6)-dimethylallyladenosine synthase (497 aa).

An MTTase N-terminal domain is found at 4-120 (RSYEVRTFGC…LPVLLERARH (117 aa)). Cysteine 13, cysteine 49, cysteine 83, cysteine 157, cysteine 161, and cysteine 164 together coordinate [4Fe-4S] cluster. Positions 143 to 374 (RASHHSAWVS…ALQDEVSWAQ (232 aa)) constitute a Radical SAM core domain. A TRAM domain is found at 376 to 445 (RELVGRRVEL…PHHLTADGPL (70 aa)).

This sequence belongs to the methylthiotransferase family. MiaB subfamily. As to quaternary structure, monomer. The cofactor is [4Fe-4S] cluster.

The protein resides in the cytoplasm. The enzyme catalyses N(6)-dimethylallyladenosine(37) in tRNA + (sulfur carrier)-SH + AH2 + 2 S-adenosyl-L-methionine = 2-methylsulfanyl-N(6)-dimethylallyladenosine(37) in tRNA + (sulfur carrier)-H + 5'-deoxyadenosine + L-methionine + A + S-adenosyl-L-homocysteine + 2 H(+). Its function is as follows. Catalyzes the methylthiolation of N6-(dimethylallyl)adenosine (i(6)A), leading to the formation of 2-methylthio-N6-(dimethylallyl)adenosine (ms(2)i(6)A) at position 37 in tRNAs that read codons beginning with uridine. The protein is tRNA-2-methylthio-N(6)-dimethylallyladenosine synthase of Frankia alni (strain DSM 45986 / CECT 9034 / ACN14a).